The following is a 144-amino-acid chain: Protection of telomeres protein 1c (144 aa).

The protein belongs to the telombin family. As to expression, expressed at extremely low levels at the limit of detection.

The protein resides in the nucleus. It localises to the chromosome. The protein localises to the telomere. Its function is as follows. Binds specifically single-stranded telomeric DNA with weak affinity. Has probably no function in the regulation of telomere length. In Arabidopsis thaliana (Mouse-ear cress), this protein is Protection of telomeres protein 1c.